The following is a 206-amino-acid chain: Somatotropin (206 aa).

Residues 1–18 (MLDRVVVLLSVLCLGVSS) form the signal peptide. A Pyrrolidone carboxylic acid modification is found at Gln-19. His-37 serves as a coordination point for Zn(2+). The cysteines at positions 70 and 179 are disulfide-linked. Zn(2+) is bound at residue Glu-188. A disulfide bridge links Cys-196 with Cys-204.

The protein belongs to the somatotropin/prolactin family.

It is found in the secreted. Its function is as follows. Growth hormone plays an important role in growth control and is involved in the regulation of several anabolic processes. Implicated as an osmoregulatory substance important for seawater adaptation. The polypeptide is Somatotropin (gh) (Pseudocaranx dentex (White trevally)).